Consider the following 810-residue polypeptide: DNA ligase (810 aa).

Residues D46–D50, S95–L96, and E129 each bind NAD(+). K131 acts as the N6-AMP-lysine intermediate in catalysis. Residues R152, E189, K305, and K329 each coordinate NAD(+). Residues C434, C437, C458, and C464 each contribute to the Zn(2+) site. The segment at E528–D548 is disordered. In terms of domain architecture, BRCT spans A731–G810.

The protein belongs to the NAD-dependent DNA ligase family. LigA subfamily. It depends on Mg(2+) as a cofactor. Requires Mn(2+) as cofactor.

The enzyme catalyses NAD(+) + (deoxyribonucleotide)n-3'-hydroxyl + 5'-phospho-(deoxyribonucleotide)m = (deoxyribonucleotide)n+m + AMP + beta-nicotinamide D-nucleotide.. DNA ligase that catalyzes the formation of phosphodiester linkages between 5'-phosphoryl and 3'-hydroxyl groups in double-stranded DNA using NAD as a coenzyme and as the energy source for the reaction. It is essential for DNA replication and repair of damaged DNA. This Methylobacterium radiotolerans (strain ATCC 27329 / DSM 1819 / JCM 2831 / NBRC 15690 / NCIMB 10815 / 0-1) protein is DNA ligase.